Reading from the N-terminus, the 520-residue chain is Cobyric acid synthase (520 aa).

In terms of domain architecture, GATase cobBQ-type spans 257–451 (WLTVAAVRLP…VHGLLESDGF (195 aa)). Cys338 (nucleophile) is an active-site residue. His443 is an active-site residue.

It belongs to the CobB/CobQ family. CobQ subfamily.

Its pathway is cofactor biosynthesis; adenosylcobalamin biosynthesis. Its function is as follows. Catalyzes amidations at positions B, D, E, and G on adenosylcobyrinic A,C-diamide. NH(2) groups are provided by glutamine, and one molecule of ATP is hydrogenolyzed for each amidation. This Nocardia farcinica (strain IFM 10152) protein is Cobyric acid synthase.